The following is a 630-amino-acid chain: Biosynthetic arginine decarboxylase (630 aa).

Residue Lys-99 is modified to N6-(pyridoxal phosphate)lysine. A substrate-binding site is contributed by 279–289 (FDVGGGLGVDY).

The protein belongs to the Orn/Lys/Arg decarboxylase class-II family. SpeA subfamily. Mg(2+) serves as cofactor. The cofactor is pyridoxal 5'-phosphate.

It carries out the reaction L-arginine + H(+) = agmatine + CO2. Its pathway is amine and polyamine biosynthesis; agmatine biosynthesis; agmatine from L-arginine: step 1/1. In terms of biological role, catalyzes the biosynthesis of agmatine from arginine. The sequence is that of Biosynthetic arginine decarboxylase from Neisseria meningitidis serogroup B (strain ATCC BAA-335 / MC58).